Consider the following 366-residue polypeptide: Protein-glutamate methylesterase/protein-glutamine glutaminase of group 2 operon (366 aa).

The Response regulatory domain maps to 19–136 (RVLIVDDSAM…GQGLPAIMRD (118 aa)). Position 70 is a 4-aspartylphosphate (D70). In terms of domain architecture, CheB-type methylesterase spans 162-356 (PGASEDWIHA…ARMMLAAAAD (195 aa)). Catalysis depends on residues S175, H201, and D298.

This sequence belongs to the CheB family. Post-translationally, phosphorylated by CheA. Phosphorylation of the N-terminal regulatory domain activates the methylesterase activity.

It is found in the cytoplasm. It catalyses the reaction [protein]-L-glutamate 5-O-methyl ester + H2O = L-glutamyl-[protein] + methanol + H(+). It carries out the reaction L-glutaminyl-[protein] + H2O = L-glutamyl-[protein] + NH4(+). In terms of biological role, involved in chemotaxis. Part of a chemotaxis signal transduction system that modulates chemotaxis in response to various stimuli. Catalyzes the demethylation of specific methylglutamate residues introduced into the chemoreceptors (methyl-accepting chemotaxis proteins or MCP) by CheR. Also mediates the irreversible deamidation of specific glutamine residues to glutamic acid. The chain is Protein-glutamate methylesterase/protein-glutamine glutaminase of group 2 operon from Cereibacter sphaeroides (Rhodobacter sphaeroides).